Reading from the N-terminus, the 218-residue chain is Probable transaldolase (218 aa).

The active-site Schiff-base intermediate with substrate is Lys-83.

This sequence belongs to the transaldolase family. Type 3B subfamily.

It localises to the cytoplasm. It catalyses the reaction D-sedoheptulose 7-phosphate + D-glyceraldehyde 3-phosphate = D-erythrose 4-phosphate + beta-D-fructose 6-phosphate. The protein operates within carbohydrate degradation; pentose phosphate pathway; D-glyceraldehyde 3-phosphate and beta-D-fructose 6-phosphate from D-ribose 5-phosphate and D-xylulose 5-phosphate (non-oxidative stage): step 2/3. Functionally, transaldolase is important for the balance of metabolites in the pentose-phosphate pathway. This chain is Probable transaldolase, found in Parvibaculum lavamentivorans (strain DS-1 / DSM 13023 / NCIMB 13966).